A 110-amino-acid chain; its full sequence is Putative zinc finger protein ORF110 (110 aa).

The C2H2-type zinc-finger motif lies at 3-26 (YVCTACKLKFHTFEEFKIHVHLFH).

The sequence is that of Putative zinc finger protein ORF110 from Acidianus filamentous virus 1 (isolate United States/Yellowstone) (AFV-1).